We begin with the raw amino-acid sequence, 119 residues long: Large ribosomal subunit protein bL20 (119 aa).

Belongs to the bacterial ribosomal protein bL20 family.

Its function is as follows. Binds directly to 23S ribosomal RNA and is necessary for the in vitro assembly process of the 50S ribosomal subunit. It is not involved in the protein synthesizing functions of that subunit. The protein is Large ribosomal subunit protein bL20 of Stenotrophomonas maltophilia (strain R551-3).